Consider the following 446-residue polypeptide: Bifunctional protein GlmU (446 aa).

Residues 1-225 (MEGIILAAGK…ETEVYGVNDR (225 aa)) form a pyrophosphorylase region. UDP-N-acetyl-alpha-D-glucosamine-binding positions include 6 to 9 (LAAG), K20, Q70, and 75 to 76 (GT). D98 serves as a coordination point for Mg(2+). UDP-N-acetyl-alpha-D-glucosamine contacts are provided by G135, E150, N165, and N223. A Mg(2+)-binding site is contributed by N223. The segment at 226–246 (VQLARLTKGVYRRKAEALMQE) is linker. The N-acetyltransferase stretch occupies residues 247 to 446 (GVTIIDPETV…RQVNKEDYVK (200 aa)). The UDP-N-acetyl-alpha-D-glucosamine site is built by R328 and K346. The active-site Proton acceptor is the H358. UDP-N-acetyl-alpha-D-glucosamine is bound by residues Y361 and N372. Acetyl-CoA-binding positions include A375, 381–382 (NY), S400, A418, and R435.

In the N-terminal section; belongs to the N-acetylglucosamine-1-phosphate uridyltransferase family. This sequence in the C-terminal section; belongs to the transferase hexapeptide repeat family. In terms of assembly, homotrimer. Requires Mg(2+) as cofactor.

The protein resides in the cytoplasm. It catalyses the reaction alpha-D-glucosamine 1-phosphate + acetyl-CoA = N-acetyl-alpha-D-glucosamine 1-phosphate + CoA + H(+). The catalysed reaction is N-acetyl-alpha-D-glucosamine 1-phosphate + UTP + H(+) = UDP-N-acetyl-alpha-D-glucosamine + diphosphate. Its pathway is nucleotide-sugar biosynthesis; UDP-N-acetyl-alpha-D-glucosamine biosynthesis; N-acetyl-alpha-D-glucosamine 1-phosphate from alpha-D-glucosamine 6-phosphate (route II): step 2/2. It participates in nucleotide-sugar biosynthesis; UDP-N-acetyl-alpha-D-glucosamine biosynthesis; UDP-N-acetyl-alpha-D-glucosamine from N-acetyl-alpha-D-glucosamine 1-phosphate: step 1/1. The protein operates within bacterial outer membrane biogenesis; LPS lipid A biosynthesis. In terms of biological role, catalyzes the last two sequential reactions in the de novo biosynthetic pathway for UDP-N-acetylglucosamine (UDP-GlcNAc). The C-terminal domain catalyzes the transfer of acetyl group from acetyl coenzyme A to glucosamine-1-phosphate (GlcN-1-P) to produce N-acetylglucosamine-1-phosphate (GlcNAc-1-P), which is converted into UDP-GlcNAc by the transfer of uridine 5-monophosphate (from uridine 5-triphosphate), a reaction catalyzed by the N-terminal domain. This is Bifunctional protein GlmU from Carboxydothermus hydrogenoformans (strain ATCC BAA-161 / DSM 6008 / Z-2901).